The following is a 365-amino-acid chain: UDP-N-acetylglucosamine--N-acetylmuramyl-(pentapeptide) pyrophosphoryl-undecaprenol N-acetylglucosamine transferase (365 aa).

UDP-N-acetyl-alpha-D-glucosamine contacts are provided by residues 19–21 (TGG), Asn-131, Arg-170, Ser-201, Ile-255, 274–279 (ALTVTE), and Gln-300.

It belongs to the glycosyltransferase 28 family. MurG subfamily.

It is found in the cell inner membrane. It carries out the reaction di-trans,octa-cis-undecaprenyl diphospho-N-acetyl-alpha-D-muramoyl-L-alanyl-D-glutamyl-meso-2,6-diaminopimeloyl-D-alanyl-D-alanine + UDP-N-acetyl-alpha-D-glucosamine = di-trans,octa-cis-undecaprenyl diphospho-[N-acetyl-alpha-D-glucosaminyl-(1-&gt;4)]-N-acetyl-alpha-D-muramoyl-L-alanyl-D-glutamyl-meso-2,6-diaminopimeloyl-D-alanyl-D-alanine + UDP + H(+). The protein operates within cell wall biogenesis; peptidoglycan biosynthesis. Functionally, cell wall formation. Catalyzes the transfer of a GlcNAc subunit on undecaprenyl-pyrophosphoryl-MurNAc-pentapeptide (lipid intermediate I) to form undecaprenyl-pyrophosphoryl-MurNAc-(pentapeptide)GlcNAc (lipid intermediate II). The chain is UDP-N-acetylglucosamine--N-acetylmuramyl-(pentapeptide) pyrophosphoryl-undecaprenol N-acetylglucosamine transferase from Acinetobacter baumannii (strain SDF).